Reading from the N-terminus, the 190-residue chain is ATP-dependent Clp protease proteolytic subunit 2 (190 aa).

Ser-98 (nucleophile) is an active-site residue. Residue His-123 is part of the active site.

It belongs to the peptidase S14 family. Fourteen ClpP subunits assemble into 2 heptameric rings which stack back to back to give a disk-like structure with a central cavity, resembling the structure of eukaryotic proteasomes.

It localises to the cytoplasm. It carries out the reaction Hydrolysis of proteins to small peptides in the presence of ATP and magnesium. alpha-casein is the usual test substrate. In the absence of ATP, only oligopeptides shorter than five residues are hydrolyzed (such as succinyl-Leu-Tyr-|-NHMec, and Leu-Tyr-Leu-|-Tyr-Trp, in which cleavage of the -Tyr-|-Leu- and -Tyr-|-Trp bonds also occurs).. In terms of biological role, cleaves peptides in various proteins in a process that requires ATP hydrolysis. Has a chymotrypsin-like activity. Plays a major role in the degradation of misfolded proteins. This is ATP-dependent Clp protease proteolytic subunit 2 from Bacillus licheniformis (strain ATCC 14580 / DSM 13 / JCM 2505 / CCUG 7422 / NBRC 12200 / NCIMB 9375 / NCTC 10341 / NRRL NRS-1264 / Gibson 46).